A 752-amino-acid chain; its full sequence is Polyribonucleotide nucleotidyltransferase (752 aa).

Residues Asp-542 and Asp-548 each coordinate Mg(2+). A KH domain is found at 608 to 667 (PRITTIQIPVSKIGELIGPKGKNINALTEETGANISIEDDGTVFISAASGEAAEAAIEKI). Residues 679-748 (GERFLGTVVK…NRGKISLVPV (70 aa)) form the S1 motif domain.

Belongs to the polyribonucleotide nucleotidyltransferase family. It depends on Mg(2+) as a cofactor.

The protein resides in the cytoplasm. It carries out the reaction RNA(n+1) + phosphate = RNA(n) + a ribonucleoside 5'-diphosphate. Its function is as follows. Involved in mRNA degradation. Catalyzes the phosphorolysis of single-stranded polyribonucleotides processively in the 3'- to 5'-direction. This Corynebacterium efficiens (strain DSM 44549 / YS-314 / AJ 12310 / JCM 11189 / NBRC 100395) protein is Polyribonucleotide nucleotidyltransferase.